The chain runs to 188 residues: ATP synthase subunit b 2 (188 aa).

The interval 1–23 (MAEGHGDANGATAHTAADGGHKA) is disordered. The segment covering 8–18 (ANGATAHTAAD) has biased composition (low complexity). Residues 37 to 57 (LVSLLIAFVALYLIVSKIALP) traverse the membrane as a helical segment.

It belongs to the ATPase B chain family. As to quaternary structure, F-type ATPases have 2 components, F(1) - the catalytic core - and F(0) - the membrane proton channel. F(1) has five subunits: alpha(3), beta(3), gamma(1), delta(1), epsilon(1). F(0) has three main subunits: a(1), b(2) and c(10-14). The alpha and beta chains form an alternating ring which encloses part of the gamma chain. F(1) is attached to F(0) by a central stalk formed by the gamma and epsilon chains, while a peripheral stalk is formed by the delta and b chains.

It is found in the cell inner membrane. Functionally, f(1)F(0) ATP synthase produces ATP from ADP in the presence of a proton or sodium gradient. F-type ATPases consist of two structural domains, F(1) containing the extramembraneous catalytic core and F(0) containing the membrane proton channel, linked together by a central stalk and a peripheral stalk. During catalysis, ATP synthesis in the catalytic domain of F(1) is coupled via a rotary mechanism of the central stalk subunits to proton translocation. Its function is as follows. Component of the F(0) channel, it forms part of the peripheral stalk, linking F(1) to F(0). The b'-subunit is a diverged and duplicated form of b found in plants and photosynthetic bacteria. The chain is ATP synthase subunit b 2 (atpF2) from Rhodopseudomonas palustris (strain BisB18).